The following is a 337-amino-acid chain: Ferredoxin--NADP reductase (337 aa).

FAD contacts are provided by Asp35, Gln43, Tyr48, Val88, Phe123, Asp289, and Thr330.

This sequence belongs to the ferredoxin--NADP reductase type 2 family. In terms of assembly, homodimer. It depends on FAD as a cofactor.

The enzyme catalyses 2 reduced [2Fe-2S]-[ferredoxin] + NADP(+) + H(+) = 2 oxidized [2Fe-2S]-[ferredoxin] + NADPH. The protein is Ferredoxin--NADP reductase of Paramagnetospirillum magneticum (strain ATCC 700264 / AMB-1) (Magnetospirillum magneticum).